A 365-amino-acid polypeptide reads, in one-letter code: Peptide chain release factor 2 (365 aa).

Gln252 carries the N5-methylglutamine modification.

Belongs to the prokaryotic/mitochondrial release factor family. In terms of processing, methylated by PrmC. Methylation increases the termination efficiency of RF2.

The protein localises to the cytoplasm. Functionally, peptide chain release factor 2 directs the termination of translation in response to the peptide chain termination codons UGA and UAA. This is Peptide chain release factor 2 from Yersinia enterocolitica serotype O:8 / biotype 1B (strain NCTC 13174 / 8081).